Reading from the N-terminus, the 294-residue chain is ATP synthase gamma chain (294 aa).

This sequence belongs to the ATPase gamma chain family. As to quaternary structure, F-type ATPases have 2 components, CF(1) - the catalytic core - and CF(0) - the membrane proton channel. CF(1) has five subunits: alpha(3), beta(3), gamma(1), delta(1), epsilon(1). CF(0) has three main subunits: a, b and c.

It localises to the cell membrane. Functionally, produces ATP from ADP in the presence of a proton gradient across the membrane. The gamma chain is believed to be important in regulating ATPase activity and the flow of protons through the CF(0) complex. The protein is ATP synthase gamma chain of Opitutus terrae (strain DSM 11246 / JCM 15787 / PB90-1).